The primary structure comprises 356 residues: tRNA N6-adenosine threonylcarbamoyltransferase (356 aa).

Histidine 110 and histidine 114 together coordinate Fe cation. Residues 132–136, aspartate 165, glycine 178, aspartate 182, and asparagine 288 contribute to the substrate site; that span reads LVSGG. Aspartate 316 lines the Fe cation pocket.

This sequence belongs to the KAE1 / TsaD family. Fe(2+) serves as cofactor.

The protein resides in the cytoplasm. It catalyses the reaction L-threonylcarbamoyladenylate + adenosine(37) in tRNA = N(6)-L-threonylcarbamoyladenosine(37) in tRNA + AMP + H(+). In terms of biological role, required for the formation of a threonylcarbamoyl group on adenosine at position 37 (t(6)A37) in tRNAs that read codons beginning with adenine. Is involved in the transfer of the threonylcarbamoyl moiety of threonylcarbamoyl-AMP (TC-AMP) to the N6 group of A37, together with TsaE and TsaB. TsaD likely plays a direct catalytic role in this reaction. The chain is tRNA N6-adenosine threonylcarbamoyltransferase from Maridesulfovibrio salexigens (strain ATCC 14822 / DSM 2638 / NCIMB 8403 / VKM B-1763) (Desulfovibrio salexigens).